Consider the following 520-residue polypeptide: UDP-N-acetylmuramoyl-L-alanyl-D-glutamate--2,6-diaminopimelate ligase (520 aa).

Position 48 (L48) interacts with UDP-N-acetyl-alpha-D-muramoyl-L-alanyl-D-glutamate. 134–140 (GTSGKTT) contacts ATP. UDP-N-acetyl-alpha-D-muramoyl-L-alanyl-D-glutamate is bound by residues 176–177 (TT), S203, and R211. K243 carries the post-translational modification N6-carboxylysine. Residues R405, 429–432 (DNPR), G483, and E487 each bind meso-2,6-diaminopimelate. A Meso-diaminopimelate recognition motif motif is present at residues 429–432 (DNPR).

This sequence belongs to the MurCDEF family. MurE subfamily. Mg(2+) serves as cofactor. Carboxylation is probably crucial for Mg(2+) binding and, consequently, for the gamma-phosphate positioning of ATP.

It localises to the cytoplasm. It carries out the reaction UDP-N-acetyl-alpha-D-muramoyl-L-alanyl-D-glutamate + meso-2,6-diaminopimelate + ATP = UDP-N-acetyl-alpha-D-muramoyl-L-alanyl-gamma-D-glutamyl-meso-2,6-diaminopimelate + ADP + phosphate + H(+). The protein operates within cell wall biogenesis; peptidoglycan biosynthesis. Its function is as follows. Catalyzes the addition of meso-diaminopimelic acid to the nucleotide precursor UDP-N-acetylmuramoyl-L-alanyl-D-glutamate (UMAG) in the biosynthesis of bacterial cell-wall peptidoglycan. This Mycobacterium avium (strain 104) protein is UDP-N-acetylmuramoyl-L-alanyl-D-glutamate--2,6-diaminopimelate ligase.